A 159-amino-acid polypeptide reads, in one-letter code: MIEGVMKEGFITTSYDSVVNWAKTGSLWPMTFGLACCAVEMMHAAAARYDIGRFGSEVFRASPRQSDLMIVAGTLCNKMAPAMRKVYDQMSEPRWVISMGSCANGGGYYHYSYSVVRGCDRIVPVDVYVPGCPPTAEALIYGIIQLQQKIRRTHTIARV.

Positions 36, 37, 102, and 132 each coordinate [4Fe-4S] cluster.

This sequence belongs to the complex I 20 kDa subunit family. NDH-1 is composed of 14 different subunits. Subunits NuoB, C, D, E, F, and G constitute the peripheral sector of the complex. Requires [4Fe-4S] cluster as cofactor.

It localises to the cell inner membrane. The enzyme catalyses a quinone + NADH + 5 H(+)(in) = a quinol + NAD(+) + 4 H(+)(out). In terms of biological role, NDH-1 shuttles electrons from NADH, via FMN and iron-sulfur (Fe-S) centers, to quinones in the respiratory chain. Couples the redox reaction to proton translocation (for every two electrons transferred, four hydrogen ions are translocated across the cytoplasmic membrane), and thus conserves the redox energy in a proton gradient. The protein is NADH-quinone oxidoreductase subunit B of Delftia acidovorans (strain DSM 14801 / SPH-1).